The following is a 422-amino-acid chain: MNLVVLLILTLLLFIVSYVVDAGQVILVDSNITRSFVDMEADFSPSVTTVETGVVYVAEPLNACRNLRNKPEQSPYGTSPLVLIIRGGCSFEYKVRNAQRSGFKAAIVYDNVDRNFLSAMGGDSDGIKIQAVFVMKRAGEMLKKYAGSEEMEVMLVPPNTEDSVWSLYASIALILSLAIFCVMVTCVFFYRYCSTIRNSTSQFNGMCRRTVKAMPSVTFTCAKIDNTTGFSCAICLEDYIVGDKLRVLPCSHKFHVACVDSWLISWRTFCPVCKRDARTTADEPLATESTPFLSSSIATSSLVCIDSPPLGSSVSFSPAHVSSSFIHQFVRSSPMNGSRISENLRRQASPLQSSSQRSHLSMKSSHSLGYSTMSPLNAMGMSPYRPYPSNASPGLFSSTNHLLSNYTANTFSHFASAHSLPD.

A signal peptide spans 1 to 22; the sequence is MNLVVLLILTLLLFIVSYVVDA. Topologically, residues 23 to 168 are lumenal; that stretch reads GQVILVDSNI…NTEDSVWSLY (146 aa). Residue N31 is glycosylated (N-linked (GlcNAc...) asparagine). The cysteines at positions 64 and 89 are disulfide-linked. Residues 81 to 146 form the PA domain; it reads LVLIIRGGCS…RAGEMLKKYA (66 aa). Residues 169–189 traverse the membrane as a helical segment; the sequence is ASIALILSLAIFCVMVTCVFF. Residues 190–422 lie on the Cytoplasmic side of the membrane; that stretch reads YRYCSTIRNS…HFASAHSLPD (233 aa). An RING-type; atypical zinc finger spans residues 232–274; the sequence is CAICLEDYIVGDKLRVLPCSHKFHVACVDSWLISWRTFCPVCK. A disordered region spans residues 344 to 368; that stretch reads LRRQASPLQSSSQRSHLSMKSSHSL. Polar residues predominate over residues 349 to 368; that stretch reads SPLQSSSQRSHLSMKSSHSL.

The protein resides in the prevacuolar compartment membrane. The protein localises to the protein storage vacuole membrane. Involved in the trafficking of vacuolar proteins. May function as a sorting receptor for protein trafficking to the protein storage vacuole (PSV). In Arabidopsis thaliana (Mouse-ear cress), this protein is Receptor homology region, transmembrane domain- and RING domain-containing protein 3 (RMR3).